A 406-amino-acid chain; its full sequence is Probable tRNA sulfurtransferase (406 aa).

Residues 60 to 166 (DQVMNRLKLV…LNGIFLSSET (107 aa)) form the THUMP domain. Residues 184-185 (MM), 209-210 (HF), Arg-266, Gly-288, and Gln-297 contribute to the ATP site.

It belongs to the ThiI family.

Its subcellular location is the cytoplasm. The catalysed reaction is [ThiI sulfur-carrier protein]-S-sulfanyl-L-cysteine + a uridine in tRNA + 2 reduced [2Fe-2S]-[ferredoxin] + ATP + H(+) = [ThiI sulfur-carrier protein]-L-cysteine + a 4-thiouridine in tRNA + 2 oxidized [2Fe-2S]-[ferredoxin] + AMP + diphosphate. The enzyme catalyses [ThiS sulfur-carrier protein]-C-terminal Gly-Gly-AMP + S-sulfanyl-L-cysteinyl-[cysteine desulfurase] + AH2 = [ThiS sulfur-carrier protein]-C-terminal-Gly-aminoethanethioate + L-cysteinyl-[cysteine desulfurase] + A + AMP + 2 H(+). It participates in cofactor biosynthesis; thiamine diphosphate biosynthesis. Functionally, catalyzes the ATP-dependent transfer of a sulfur to tRNA to produce 4-thiouridine in position 8 of tRNAs, which functions as a near-UV photosensor. Also catalyzes the transfer of sulfur to the sulfur carrier protein ThiS, forming ThiS-thiocarboxylate. This is a step in the synthesis of thiazole, in the thiamine biosynthesis pathway. The sulfur is donated as persulfide by IscS. This chain is Probable tRNA sulfurtransferase, found in Limosilactobacillus reuteri subsp. reuteri (strain JCM 1112) (Lactobacillus reuteri).